The following is a 243-amino-acid chain: Geranylgeranylglyceryl phosphate synthase (243 aa).

2 residues coordinate Mg(2+): D22 and S51. Sn-glycerol 1-phosphate contacts are provided by residues 170–176, 201–202, and 223–224; these read YLESGSG, GG, and GT.

Belongs to the GGGP/HepGP synthase family. Group II subfamily. The cofactor is Mg(2+).

It localises to the cytoplasm. It carries out the reaction sn-glycerol 1-phosphate + (2E,6E,10E)-geranylgeranyl diphosphate = sn-3-O-(geranylgeranyl)glycerol 1-phosphate + diphosphate. The protein operates within membrane lipid metabolism; glycerophospholipid metabolism. Prenyltransferase that catalyzes the transfer of the geranylgeranyl moiety of geranylgeranyl diphosphate (GGPP) to the C3 hydroxyl of sn-glycerol-1-phosphate (G1P). This reaction is the first ether-bond-formation step in the biosynthesis of archaeal membrane lipids. The polypeptide is Geranylgeranylglyceryl phosphate synthase (Picrophilus torridus (strain ATCC 700027 / DSM 9790 / JCM 10055 / NBRC 100828 / KAW 2/3)).